We begin with the raw amino-acid sequence, 204 residues long: Inner membrane protein BB_0250 (204 aa).

Helical transmembrane passes span 17–37 (IAYS…NVPI), 58–78 (ILIF…SFYI), 101–121 (YYYG…PFGV), 139–159 (FIVS…TLSF), and 172–192 (IKII…IIYV).

It belongs to the DedA family.

Its subcellular location is the cell inner membrane. Functionally, required for proper cell division and envelope integrity. In Borreliella burgdorferi (strain ATCC 35210 / DSM 4680 / CIP 102532 / B31) (Borrelia burgdorferi), this protein is Inner membrane protein BB_0250.